We begin with the raw amino-acid sequence, 1015 residues long: Cytosolic carboxypeptidase 1 (1015 aa).

The tract at residues 384–462 (LPTATPSTPG…GALPKTTRLN (79 aa)) is disordered. Positions 416–451 (EDGMDEEDEAFVRDDDDEGKDDRGSDDDDGKDDDEI) are enriched in acidic residues. Positions 727 to 1013 (YPYTYSFLNS…DLLHSFLEMT (287 aa)) constitute a Peptidase M14 domain. Residues histidine 792, glutamate 795, and histidine 891 each contribute to the Zn(2+) site. Glutamate 977 acts as the Proton donor/acceptor in catalysis.

It belongs to the peptidase M14 family. Requires Zn(2+) as cofactor. In hermaphrodites and males, expressed in amphid and IL2 ciliated sensory neurons. In males, expressed in CEM head neurons, RnB and HOB tail neurons, and in gubernacular erector and retractor muscles.

The protein resides in the perikaryon. It localises to the cell projection. It is found in the cilium. Its subcellular location is the dendrite. Functionally, catalyzes the deglutamylation of polyglutamate side chains generated by post-translational polyglutamylation of proteins such as tubulins. Via the deglutamylation of tubulin, regulates the localization and velocity of kinesin motors and the structural integrity of microtubules in sensory cilia. In male CEM sensory neurons, regulates the cilia release of bioactive extracellular vesicles. Also regulates microtubule dynamics in uterine muscle cells. The protein is Cytosolic carboxypeptidase 1 of Caenorhabditis elegans.